The chain runs to 492 residues: Trigger factor (492 aa).

The interval 77–96 is disordered; that stretch reads EILSSRGEKSATQPAISMTE. A PPIase FKBP-type domain is found at 169-254; the sequence is GDRVTMNYLG…VKEVAAAAAV (86 aa). The segment at 439-492 is disordered; the sequence is ELLADDGEEETETKKKAPAKKKAAAKADDAAEGEEAAPKKKAPAKKKATEADAE.

This sequence belongs to the FKBP-type PPIase family. Tig subfamily.

Its subcellular location is the cytoplasm. It carries out the reaction [protein]-peptidylproline (omega=180) = [protein]-peptidylproline (omega=0). In terms of biological role, involved in protein export. Acts as a chaperone by maintaining the newly synthesized protein in an open conformation. Functions as a peptidyl-prolyl cis-trans isomerase. The protein is Trigger factor of Agrobacterium fabrum (strain C58 / ATCC 33970) (Agrobacterium tumefaciens (strain C58)).